The sequence spans 1066 residues: Probable sucrose-phosphate synthase 4 (1066 aa).

Disordered regions lie at residues Y132–P166 and P688–D714. A compositionally biased stretch (basic and acidic residues) spans E143–R162.

Belongs to the glycosyltransferase 1 family. As to quaternary structure, homodimer or homotetramer. As to expression, expressed in germinating seeds.

The enzyme catalyses beta-D-fructose 6-phosphate + UDP-alpha-D-glucose = sucrose 6(F)-phosphate + UDP + H(+). It functions in the pathway glycan biosynthesis; sucrose biosynthesis; sucrose from D-fructose 6-phosphate and UDP-alpha-D-glucose: step 1/2. Its activity is regulated as follows. Activity is regulated by phosphorylation and moderated by concentration of metabolites and light. In terms of biological role, plays a role in photosynthetic sucrose synthesis by catalyzing the rate-limiting step of sucrose biosynthesis from UDP-glucose and fructose- 6-phosphate. Involved in the regulation of carbon partitioning in the leaves of plants. May regulate the synthesis of sucrose and therefore play a major role as a limiting factor in the export of photoassimilates out of the leaf. Plays a role for sucrose availability that is essential for plant growth and fiber elongation. This chain is Probable sucrose-phosphate synthase 4 (SPS4), found in Oryza sativa subsp. japonica (Rice).